A 237-amino-acid polypeptide reads, in one-letter code: Ribonuclease PH (237 aa).

Residues R86 and 124-126 (GTR) each bind phosphate.

It belongs to the RNase PH family. Homohexameric ring arranged as a trimer of dimers.

The enzyme catalyses tRNA(n+1) + phosphate = tRNA(n) + a ribonucleoside 5'-diphosphate. Phosphorolytic 3'-5' exoribonuclease that plays an important role in tRNA 3'-end maturation. Removes nucleotide residues following the 3'-CCA terminus of tRNAs; can also add nucleotides to the ends of RNA molecules by using nucleoside diphosphates as substrates, but this may not be physiologically important. Probably plays a role in initiation of 16S rRNA degradation (leading to ribosome degradation) during starvation. The chain is Ribonuclease PH from Nitrobacter winogradskyi (strain ATCC 25391 / DSM 10237 / CIP 104748 / NCIMB 11846 / Nb-255).